Consider the following 489-residue polypeptide: Lysine--tRNA ligase (489 aa).

2 residues coordinate Mg(2+): E399 and E406.

The protein belongs to the class-II aminoacyl-tRNA synthetase family. Homodimer. Requires Mg(2+) as cofactor.

It localises to the cytoplasm. The catalysed reaction is tRNA(Lys) + L-lysine + ATP = L-lysyl-tRNA(Lys) + AMP + diphosphate. The protein is Lysine--tRNA ligase of Synechococcus sp. (strain CC9311).